Here is a 97-residue protein sequence, read N- to C-terminus: Putative septation protein SpoVG (97 aa).

Belongs to the SpoVG family.

In terms of biological role, essential for sporulation. Interferes with or is a negative regulator of the pathway leading to asymmetric septation. This Bacillus cytotoxicus (strain DSM 22905 / CIP 110041 / 391-98 / NVH 391-98) protein is Putative septation protein SpoVG.